Consider the following 73-residue polypeptide: Plasticin-A1 (73 aa).

Residues 1 to 22 (MAFLKKSLFLVLFLAIVPLSIC) form the signal peptide. A propeptide spanning residues 23–42 (EEEKREEENEEKQEDDDQSE) is cleaved from the precursor. Residues 25 to 45 (EKREEENEEKQEDDDQSEKRG) form a disordered region. The span at 30 to 40 (ENEEKQEDDDQ) shows a compositional bias: acidic residues. G70 is subject to Glycine amide. Positions 72–73 (ES) are excised as a propeptide.

This sequence belongs to the frog skin active peptide (FSAP) family. Plasticin subfamily. In terms of tissue distribution, expressed by the skin glands.

The protein localises to the secreted. It localises to the target cell membrane. In terms of biological role, peptide with no antimicrobial activity. May act in synergy with cationic peptides by enhancing their activity. Has a moderate hemolytic activity. The protein is Plasticin-A1 of Agalychnis annae (Blue-sided leaf frog).